The sequence spans 469 residues: ATP synthase subunit beta (469 aa).

Residue 156–163 (GGAGVGKT) coordinates ATP.

The protein belongs to the ATPase alpha/beta chains family. As to quaternary structure, F-type ATPases have 2 components, CF(1) - the catalytic core - and CF(0) - the membrane proton channel. CF(1) has five subunits: alpha(3), beta(3), gamma(1), delta(1), epsilon(1). CF(0) has three main subunits: a(1), b(2) and c(9-12). The alpha and beta chains form an alternating ring which encloses part of the gamma chain. CF(1) is attached to CF(0) by a central stalk formed by the gamma and epsilon chains, while a peripheral stalk is formed by the delta and b chains.

The protein localises to the cell membrane. It carries out the reaction ATP + H2O + 4 H(+)(in) = ADP + phosphate + 5 H(+)(out). Its function is as follows. Produces ATP from ADP in the presence of a proton gradient across the membrane. The catalytic sites are hosted primarily by the beta subunits. The sequence is that of ATP synthase subunit beta from Lactococcus lactis subsp. cremoris (strain SK11).